Reading from the N-terminus, the 396-residue chain is Elongation factor Tu (396 aa).

The region spanning 10–205 (KPHVNIGTIG…ACDDNIPDPV (196 aa)) is the tr-type G domain. Residues 19–26 (GHVDHGKT) are G1. 19-26 (GHVDHGKT) is a GTP binding site. Position 26 (threonine 26) interacts with Mg(2+). Positions 62–66 (GITIN) are G2. A G3 region spans residues 83 to 86 (DAPG). GTP is bound by residues 83–87 (DAPGH) and 138–141 (NKCD). The tract at residues 138–141 (NKCD) is G4. Residues 175–177 (SAL) form a G5 region.

Belongs to the TRAFAC class translation factor GTPase superfamily. Classic translation factor GTPase family. EF-Tu/EF-1A subfamily. In terms of assembly, monomer.

The protein localises to the cytoplasm. It catalyses the reaction GTP + H2O = GDP + phosphate + H(+). Its function is as follows. GTP hydrolase that promotes the GTP-dependent binding of aminoacyl-tRNA to the A-site of ribosomes during protein biosynthesis. This Corynebacterium efficiens (strain DSM 44549 / YS-314 / AJ 12310 / JCM 11189 / NBRC 100395) protein is Elongation factor Tu.